The primary structure comprises 214 residues: Octanoyltransferase (214 aa).

Residues 31 to 206 form the BPL/LPL catalytic domain; the sequence is KDDADEIWLL…QLAEQLGYNY (176 aa). Substrate contacts are provided by residues 70–77, 137–139, and 150–152; these read RGGQVTYH, SLG, and GLA. The active-site Acyl-thioester intermediate is the Cys168.

Belongs to the LipB family.

The protein localises to the cytoplasm. The catalysed reaction is octanoyl-[ACP] + L-lysyl-[protein] = N(6)-octanoyl-L-lysyl-[protein] + holo-[ACP] + H(+). The protein operates within protein modification; protein lipoylation via endogenous pathway; protein N(6)-(lipoyl)lysine from octanoyl-[acyl-carrier-protein]: step 1/2. Its function is as follows. Catalyzes the transfer of endogenously produced octanoic acid from octanoyl-acyl-carrier-protein onto the lipoyl domains of lipoate-dependent enzymes. Lipoyl-ACP can also act as a substrate although octanoyl-ACP is likely to be the physiological substrate. The protein is Octanoyltransferase of Marinomonas sp. (strain MWYL1).